Here is a 783-residue protein sequence, read N- to C-terminus: Cation/H(+) antiporter 10 (783 aa).

12 helical membrane-spanning segments follow: residues 31-51 (VVFG…FFCI), 61-81 (IGIS…PQLF), 100-120 (IAAL…LMTV), 135-155 (VVIG…QNFF), 175-195 (AIVI…LLEL), 206-226 (ALSA…VASI), 244-264 (AVII…QWVI), 276-295 (MYIH…FVFF), 300-322 (ILGP…ALEA), 356-376 (IFFN…ACLA), 389-409 (LAVS…YEAV), and 418-438 (ATYS…PTVL).

This sequence belongs to the monovalent cation:proton antiporter 2 (CPA2) transporter (TC 2.A.37) family. CHX (TC 2.A.37.4) subfamily. In terms of tissue distribution, specifically expressed in pollen.

Its subcellular location is the membrane. May operate as a cation/H(+) antiporter. This is Cation/H(+) antiporter 10 (CHX10) from Arabidopsis thaliana (Mouse-ear cress).